Here is a 157-residue protein sequence, read N- to C-terminus: 2-C-methyl-D-erythritol 2,4-cyclodiphosphate synthase (157 aa).

A divalent metal cation-binding residues include D9 and H11. Residues 9–11 and 35–36 contribute to the 4-CDP-2-C-methyl-D-erythritol 2-phosphate site; these read DVH and HS. H43 contributes to the a divalent metal cation binding site. 4-CDP-2-C-methyl-D-erythritol 2-phosphate is bound by residues 57-59, 62-66, 101-107, 133-136, F140, and R143; these read DIG, FPDTD, AEKPKMA, and TTTE.

This sequence belongs to the IspF family. Homotrimer. The cofactor is a divalent metal cation.

It carries out the reaction 4-CDP-2-C-methyl-D-erythritol 2-phosphate = 2-C-methyl-D-erythritol 2,4-cyclic diphosphate + CMP. The protein operates within isoprenoid biosynthesis; isopentenyl diphosphate biosynthesis via DXP pathway; isopentenyl diphosphate from 1-deoxy-D-xylulose 5-phosphate: step 4/6. Involved in the biosynthesis of isopentenyl diphosphate (IPP) and dimethylallyl diphosphate (DMAPP), two major building blocks of isoprenoid compounds. Catalyzes the conversion of 4-diphosphocytidyl-2-C-methyl-D-erythritol 2-phosphate (CDP-ME2P) to 2-C-methyl-D-erythritol 2,4-cyclodiphosphate (ME-CPP) with a corresponding release of cytidine 5-monophosphate (CMP). This Listeria monocytogenes serotype 4b (strain CLIP80459) protein is 2-C-methyl-D-erythritol 2,4-cyclodiphosphate synthase.